We begin with the raw amino-acid sequence, 104 residues long: Circadian clock oscillator protein KaiB (104 aa).

It belongs to the KaiB family. In terms of assembly, the KaiABC complex composition changes during the circadian cycle to control KaiC phosphorylation. Complexes KaiC(6), KaiA(2-4):KaiC(6), KaiB(6):KaiC(6) and KaiC(6):KaiB(6):KaiA(12) are among the most important forms, many form cooperatively. Undergoes a major conformational rearrangment; in the free state forms homotetramers as a dimer of dimers. When bound to the CI domain of KaiC switches to a monomeric thioredoxin-fold (KaiB(fs)). KaiB(fs) binds CikA, leading it to dephosphorylate phospho-RpaA.

Its function is as follows. Key component of the KaiABC oscillator complex, which constitutes the main circadian regulator in cyanobacteria. Complex composition changes during the circadian cycle to control KaiC phosphorylation. KaiA stimulates KaiC autophosphorylation, while KaiB sequesters KaiA, leading to KaiC autodephosphorylation. Phospho-Ser-431 KaiC accumulation triggers binding of KaiB to form the KaiB(6):KaiC(6) complex, leading to changes in output regulators CikA and SasA. KaiB switches to a thioredoxin-like fold (KaiB(fs)) when bound to KaiC. KaiB(6):KaiC(6) formation exposes a site for KaiA binding that sequesters KaiA from KaiC, making the KaiC(6):KaiB(6):KaiA(12) complex that results in KaiC autodephosphorylation. In terms of biological role, a metamorphic protein which reversibly switches between an inactive tetrameric fold and a rare, thioredoxin-like monomeric fold (KaiB(fs)). KaiB(fs) binds phospho-KaiC, KaiA and CikA. KaiA and CikA compete for binding to KaiB(fs), and KaiB(fs) and SasA compete for binding to KaiC, thus the clock oscillator and output signal pathway are tightly coupled. This is Circadian clock oscillator protein KaiB from Trichodesmium erythraeum (strain IMS101).